A 552-amino-acid polypeptide reads, in one-letter code: Protein FAM234A (552 aa).

A compositionally biased stretch (basic and acidic residues) spans 1–22 (MLDHKDLEAEIHPLKNEERKSQ). The disordered stretch occupies residues 1-40 (MLDHKDLEAEIHPLKNEERKSQENLGNPSKNEDNVKSAPP). The Cytoplasmic portion of the chain corresponds to 1-49 (MLDHKDLEAEIHPLKNEERKSQENLGNPSKNEDNVKSAPPQSRLSRCRA). Position 21 is a phosphoserine (Ser-21). A helical; Signal-anchor for type II membrane protein transmembrane segment spans residues 50 to 70 (AAFFLSLFLCLFVVFVVSFVI). Topologically, residues 71 to 552 (PCPDRPASQR…FSRLRYQSEA (482 aa)) are extracellular. Asn-116, Asn-314, Asn-389, and Asn-473 each carry an N-linked (GlcNAc...) asparagine glycan.

Belongs to the FAM234 family.

The protein localises to the membrane. The chain is Protein FAM234A from Homo sapiens (Human).